The sequence spans 324 residues: Viral cathepsin (324 aa).

The N-terminal stretch at 1 to 16 (MNKIVLYLLVYGATLG) is a signal peptide. The propeptide at 17-113 (AAYDLLKAPS…VVLDRPPDKG (97 aa)) is activation peptide. 3 cysteine pairs are disulfide-bonded: Cys134–Cys175, Cys168–Cys208, and Cys263–Cys311. The active site involves Cys137. Asn159 is a glycosylation site (N-linked (GlcNAc...) asparagine; by host). Active-site residues include His270 and Asn290.

This sequence belongs to the peptidase C1 family. Synthesized as an inactive proenzyme and activated by proteolytic removal of the inhibitory propeptide.

It carries out the reaction Endopeptidase of broad specificity, hydrolyzing substrates of both cathepsin L and cathepsin B.. Cysteine protease that plays an essential role in host liquefaction to facilitate horizontal transmission of the virus. May participate in the degradation of foreign protein expressed by the baculovirus system. This Antheraea pernyi nuclear polyhedrosis virus (ApNPV) protein is Viral cathepsin (VCATH).